The primary structure comprises 53 residues: Rubredoxin (53 aa).

Residues 1-53 enclose the Rubredoxin-like domain; the sequence is MQKFECTLCGYIYDPALVGPDTPDQDGAFEDVSENWVCPLCGAGKEDFEVYED. Fe cation is bound by residues Cys6, Cys9, Cys38, and Cys41.

It belongs to the rubredoxin family. Fe(3+) serves as cofactor.

In terms of biological role, rubredoxin is a small nonheme, iron protein lacking acid-labile sulfide. Its single Fe, chelated to 4 Cys, functions as an electron acceptor and may also stabilize the conformation of the molecule. The sequence is that of Rubredoxin from Peptoniphilus asaccharolyticus (Peptostreptococcus asaccharolyticus).